We begin with the raw amino-acid sequence, 317 residues long: tRNA N6-adenosine threonylcarbamoyltransferase (317 aa).

The Fe cation site is built by His-110 and His-114. Residues 132-136, Asp-165, Gly-178, Asp-182, and Asn-271 each bind substrate; that span reads VVSGG. Asp-300 contributes to the Fe cation binding site.

This sequence belongs to the KAE1 / TsaD family. Fe(2+) is required as a cofactor.

Its subcellular location is the cytoplasm. It carries out the reaction L-threonylcarbamoyladenylate + adenosine(37) in tRNA = N(6)-L-threonylcarbamoyladenosine(37) in tRNA + AMP + H(+). Functionally, required for the formation of a threonylcarbamoyl group on adenosine at position 37 (t(6)A37) in tRNAs that read codons beginning with adenine. Is involved in the transfer of the threonylcarbamoyl moiety of threonylcarbamoyl-AMP (TC-AMP) to the N6 group of A37, together with TsaE and TsaB. TsaD likely plays a direct catalytic role in this reaction. The protein is tRNA N6-adenosine threonylcarbamoyltransferase of Mesoplasma florum (strain ATCC 33453 / NBRC 100688 / NCTC 11704 / L1) (Acholeplasma florum).